A 56-amino-acid polypeptide reads, in one-letter code: Protein SspF (56 aa).

This sequence belongs to the alpha/beta-type SASP family.

Functionally, may play some important role in either sporulation or the dormant spore. The polypeptide is Protein SspF (sspF) (Priestia megaterium (strain ATCC 12872 / QMB1551) (Bacillus megaterium)).